The primary structure comprises 495 residues: Leucine aminopeptidase 2 (495 aa).

Positions 1-21 (MKSQLLSLAVAVSTISQGVVG) are cleaved as a signal peptide. The 95-residue stretch at 124–218 (PPANKIMAEL…EDGKNLASLV (95 aa)) folds into the PA domain. N-linked (GlcNAc...) asparagine glycans are attached at residues Asn142 and Asn235. 2 residues coordinate Zn(2+): His259 and Asp271. Residue Asn272 is glycosylated (N-linked (GlcNAc...) asparagine). Glu303 functions as the Proton acceptor in the catalytic mechanism. Residues Glu304 and Asp332 each coordinate Zn(2+). The N-linked (GlcNAc...) asparagine glycan is linked to Asn352. A Zn(2+)-binding site is contributed by His430.

This sequence belongs to the peptidase M28 family. M28A subfamily. In terms of assembly, monomer. Requires Zn(2+) as cofactor.

Its subcellular location is the secreted. Its function is as follows. Extracellular aminopeptidase that releases a wide variety of amino acids from natural peptides and contributes to pathogenicity. The sequence is that of Leucine aminopeptidase 2 (LAP2) from Trichophyton equinum (Horse ringworm fungus).